The following is a 646-amino-acid chain: Peptidylprolyl isomerase domain and WD repeat-containing protein 1 (646 aa).

Positions 1–30 (MAAESGSDFQQRRRRRRDPEEPEKTELSER) are disordered. A2 is modified (N-acetylalanine). Basic and acidic residues predominate over residues 17-30 (RDPEEPEKTELSER). WD repeat units lie at residues 88–126 (MHRDVITHVVCTKTDFIITASHDGHVKFWKKIEEGIEFV), 131–170 (SHLGVIECIAVSSEGALFCSVGDDKAMKVFDVVNFDMINM), 221–260 (LHTSPLTQIRLNPVYKAVVSSDKSGMIEYWTGPPHEYKFP), and 278–319 (KCKA…RVFD). Basic and acidic residues predominate over residues 455–478 (EPEDTKSADSDRDVFNEKPSKEEV). Residues 455–490 (EPEDTKSADSDRDVFNEKPSKEEVMAATQAEGPKRV) form a disordered region. The region spanning 490–645 (VSDSAIIHTS…EDVSIINITV (156 aa)) is the PPIase cyclophilin-type domain.

It belongs to the cyclophilin-type PPIase family. PPIL1 subfamily. Identified in the spliceosome C complex.

The protein resides in the nucleus. It catalyses the reaction [protein]-peptidylproline (omega=180) = [protein]-peptidylproline (omega=0). Its activity is regulated as follows. Inhibited by cyclosporin A (CsA). Its function is as follows. PPIase that catalyzes the cis-trans isomerization of proline imidic peptide bonds in oligopeptides and may therefore assist protein folding. May be involved in pre-mRNA splicing. This is Peptidylprolyl isomerase domain and WD repeat-containing protein 1 from Pongo abelii (Sumatran orangutan).